The sequence spans 955 residues: MDQNGVNEGTGHKSVDLIQIMDKWQKKWTEAKIFEAEHDLRDKFFITAAFPYLNGVLHAGHLRTFTIPETIARYQRMKNKNVLWTFGFHVTGTPILGLANQIKDRKEDIIWAYNNLHNIPMDELLKLKTPEAIVECFSKKATEAFKRMGFSLDWRRNFKTDDKVFSKFIEWQFYKLKEMGHITKGSHPVRYCPKCENPVEDHDLLHGEESTTVEYSLIKFTSEFDGKEIIMPMATLRPETLFGVTNAWVNPNEIYVMAKVHDEIQKLDGEDVELKYNGIWIVGKECADKLKEQDRKIEILKEIKGNELLGLKIKNPVTKKEVPLLPADFVEMGIGTGWVMSVPAHAPYDYVALRDLGKIEEVGLIPLIEIEGYDKYPAKEIVEKLGVKDQNDDELLEQATSKIYKDEFHKGKLNENCGEYAGISVKDIKEKLTKDYLNSNIAEIMYEFSEQKVVCRCGEKCIIKTVKGQWFINYSDENWKKLAHECIDNMNFAPENIRQEFHNKVDWMKDKACARKKGLGTILPFDENWIIESLSDSTIYMAYYTIARFINEGLTPEQLIPELFEYVYLGNGNVEEITKNSNISKETIEEMRKEFLYYYPLDWRCSAKDLIPNHLTFMIFNHVALFGREHWPRGIEINGYVTIEGKKLSKSKGPVLPVSEVAENFGADVARFYITTCAELPQDADVKFKEMEKARDNLIKLYELAVSVMEEEKTEKELSLIDKWLLHKTYSSINGAETAYEEFQLRKIGLMFYELINDLRWYKRRGGENNNVLKEVVEIWTKLLSPVTPHLCEEIWEKLGYAGFISQELYPEIKLEMVNEDLELGEEFIKSAMEDIRNINGVAKINPEKMYLYTADDWKYDLLEFMNENSEKNVKALIPMVMKEDKFKRHGKEVMKLINEIMKIGVKKAIAEVEILENAKTFIESEFDCEVIVNGEDVKGKKKFAIPYKPAIYME.

Residues 51 to 61 carry the 'HIGH' region motif; the sequence is PYLNGVLHAGH. Positions 647–651 match the 'KMSKS' region motif; that stretch reads KLSKS. K650 provides a ligand contact to ATP.

It belongs to the class-I aminoacyl-tRNA synthetase family.

The protein localises to the cytoplasm. It catalyses the reaction tRNA(Leu) + L-leucine + ATP = L-leucyl-tRNA(Leu) + AMP + diphosphate. This is Leucine--tRNA ligase from Methanococcus maripaludis (strain C5 / ATCC BAA-1333).